Consider the following 423-residue polypeptide: Galactosylceramide sulfotransferase (423 aa).

Topologically, residues 1 to 12 (MTLLPKKPCKSK) are cytoplasmic. Residues 13-35 (AKGLLLGALFTSFLLLLYSYVVP) form a helical; Signal-anchor for type II membrane protein membrane-spanning segment. At 36–423 (PLYPNMAFTT…WKFLRDFLRW (388 aa)) the chain is on the lumenal side. N-linked (GlcNAc...) asparagine glycans are attached at residues Asn-66 and Asn-312.

The protein belongs to the galactose-3-O-sulfotransferase family. Expressed in brain, testis, kidney, stomach, small intestine, liver, and lung. Not detected in heart, skeletal muscle, and spleen.

It localises to the golgi apparatus membrane. It catalyses the reaction a beta-D-galactosyl-(1&lt;-&gt;1')-N-acylsphing-4-enine + 3'-phosphoadenylyl sulfate = an N-acyl-1-beta-D-(3-O-sulfo)-galactosyl-sphing-4-enine + adenosine 3',5'-bisphosphate + H(+). The enzyme catalyses a 1-O-alkyl-2-acyl-3-O-(beta-D-galactosyl)-sn-glycerol + 3'-phosphoadenylyl sulfate = a 1-O-alkyl-2-acyl-3-(beta-D-3-sulfogalactosyl)-sn-glycerol + adenosine 3',5'-bisphosphate + H(+). The catalysed reaction is a beta-D-Gal-(1&lt;-&gt;1')-ceramide + 3'-phosphoadenylyl sulfate = 1-(3-O-sulfo-beta-D-galactosyl)-ceramide + adenosine 3',5'-bisphosphate + H(+). It carries out the reaction a 1,2-diacyl-3-O-(beta-D-galactosyl)-sn-glycerol + 3'-phosphoadenylyl sulfate = 1,2-diacyl-3-(3-O-sulfo-beta-D-galactosyl)-sn-glycerol + adenosine 3',5'-bisphosphate + H(+). It catalyses the reaction a beta-D-Gal-(1-&gt;4)-beta-D-Glc-(1&lt;-&gt;1)-Cer(d18:1(4E)) + 3'-phosphoadenylyl sulfate = beta-D-3-sulfogalactosyl-(1-&gt;4)-beta-D-glucosyl-(1&lt;-&gt;1')-N-acylsphing-4-enine + adenosine 3',5'-bisphosphate + H(+). It functions in the pathway lipid metabolism; sphingolipid metabolism. Its function is as follows. Catalyzes the transfer of a sulfate group to position 3 of non-reducing beta-galactosyl residues in glycerolipids and sphingolipids, therefore participates in the biosynthesis of sulfoglycolipids. Catalyzes the synthesis of galactosylceramide sulfate (sulfatide), a major lipid component of the myelin sheath and of monogalactosylalkylacylglycerol sulfate (seminolipid), present in spermatocytes. Seems to prefer beta-glycosides at the non-reducing termini of sugar chains attached to a lipid moiety. Also acts on lactosylceramide, galactosyl 1-alkyl-2-sn-glycerol and galactosyl diacylglycerol (in vitro). This chain is Galactosylceramide sulfotransferase, found in Mus musculus (Mouse).